The sequence spans 118 residues: Large ribosomal subunit protein bL20 (118 aa).

The protein belongs to the bacterial ribosomal protein bL20 family.

Its function is as follows. Binds directly to 23S ribosomal RNA and is necessary for the in vitro assembly process of the 50S ribosomal subunit. It is not involved in the protein synthesizing functions of that subunit. This is Large ribosomal subunit protein bL20 from Thermosipho melanesiensis (strain DSM 12029 / CIP 104789 / BI429).